The primary structure comprises 626 residues: Phosphomethylpyrimidine synthase (626 aa).

The interval Met1–Gln22 is disordered. The span at Leu10–Gln22 shows a compositional bias: polar residues. Substrate-binding positions include Asn232, Met261, Tyr290, His326, Ser346–Gly348, Asp387–Arg390, and Glu426. Position 430 (His430) interacts with Zn(2+). Tyr453 is a substrate binding site. Position 494 (His494) interacts with Zn(2+). Residues Cys574, Cys577, and Cys582 each coordinate [4Fe-4S] cluster.

Belongs to the ThiC family. In terms of assembly, homodimer. [4Fe-4S] cluster serves as cofactor.

The catalysed reaction is 5-amino-1-(5-phospho-beta-D-ribosyl)imidazole + S-adenosyl-L-methionine = 4-amino-2-methyl-5-(phosphooxymethyl)pyrimidine + CO + 5'-deoxyadenosine + formate + L-methionine + 3 H(+). Its pathway is cofactor biosynthesis; thiamine diphosphate biosynthesis. Functionally, catalyzes the synthesis of the hydroxymethylpyrimidine phosphate (HMP-P) moiety of thiamine from aminoimidazole ribotide (AIR) in a radical S-adenosyl-L-methionine (SAM)-dependent reaction. In Pseudomonas putida (strain ATCC 47054 / DSM 6125 / CFBP 8728 / NCIMB 11950 / KT2440), this protein is Phosphomethylpyrimidine synthase.